The sequence spans 519 residues: MFEISLSDPVELRDADDAALLAAIEDCARAEVAAGARRLSAIAELTSRRTGNDQRADWACDGWDCAAAEVAAALTVSHRKASGQMHLSLTLNRLPQVAALFLAGQLSARLVSIIAWRTYLVRDPEALSLLDAALAKHATAWGPLSAPKLEKAIDSWIDRYDPAALRRTRISARSRDLCIGDPDEDAGTAALWGRLFATDAAMLDKRLTQLAHGVCDDDPRTIAQRRADALGALAAGADRLTCGCGNSDCPSSAGNHRQATGVVIHVVADAAALGAAPDPRLSGPEPALAPEAPATPAVKPPAALISGGGVVPAPLLAELIRGGAALSRMRHPGDLRSEPHYRPSAKLAEFVRIRDMTCRFPGCDQPTEFCDIDHTLPYPLGPTHPSNLKCLCRKHHLLKTFWTGWRDVQLPDGTIIWTAPNGHTYTTHPDSRIFLPSWHTTTAALPPAPSPPAIGPTHTLLMPRRRRTRAAELAHRIKRERAHVTQRNKPPPSGGDTAVAEGFEPPDGVSRLSLSRRVH.

Basic residues predominate over residues 477 to 486; that stretch reads IKRERAHVTQ. The segment at 477 to 519 is disordered; sequence IKRERAHVTQRNKPPPSGGDTAVAEGFEPPDGVSRLSLSRRVH.

This is an uncharacterized protein from Mycobacterium tuberculosis (strain ATCC 25618 / H37Rv).